The sequence spans 270 residues: Bis(5'-nucleosyl)-tetraphosphatase, symmetrical (270 aa).

The protein belongs to the Ap4A hydrolase family.

The catalysed reaction is P(1),P(4)-bis(5'-adenosyl) tetraphosphate + H2O = 2 ADP + 2 H(+). In terms of biological role, hydrolyzes diadenosine 5',5'''-P1,P4-tetraphosphate to yield ADP. The polypeptide is Bis(5'-nucleosyl)-tetraphosphatase, symmetrical (Actinobacillus pleuropneumoniae serotype 3 (strain JL03)).